We begin with the raw amino-acid sequence, 254 residues long: GPI alpha-1,4-mannosyltransferase I, stabilizing subunit (254 aa).

The N-terminal stretch at 1–22 (MAAGAVAWLLLWAAWLVGRLAA) is a signal peptide. At 23 to 226 (DFSDAPFSAG…PVGLTIHTSL (204 aa)) the chain is on the lumenal side. N-linked (GlcNAc...) asparagine glycosylation is present at Asn211. The chain crosses the membrane as a helical span at residues 227-247 (VCSVTLLITILCSTLILLAVF). At 248–254 (KYGHFSL) the chain is on the cytoplasmic side.

This sequence belongs to the PIGX family. In terms of assembly, part of the glycosylphosphatidylinositol-mannosyltransferase I complex that is composed of PIGM and PIGX. Interacts with PIGM; PIGX stabilizes PIGM.

Its subcellular location is the endoplasmic reticulum membrane. Its pathway is glycolipid biosynthesis; glycosylphosphatidylinositol-anchor biosynthesis. Functionally, stabilizing subunit of the glycosylphosphatidylinositol-mannosyltransferase I complex which catalyzes the transfer of the first mannose, via an alpha-1,4 bond from a dolichol-phosphate-mannose (Dol-P-Man) to the glucosaminyl acyl phosphatidylinositol (GlcN-(acyl)PI) intermediate to generate alpha-D-Man-(1-&gt;4)-alpha-D-GlcN-(1-&gt;6)-(1-radyl,2-acyl-sn-glycero-3-phospho)-2-acyl-inositol and participates in the sixth step of the glycosylphosphatidylinositol-anchor biosynthesis. Probably acts by stabilizing the mannosyltransferase PIGM. This chain is GPI alpha-1,4-mannosyltransferase I, stabilizing subunit, found in Mus musculus (Mouse).